The chain runs to 363 residues: Transcription factor IIIA (363 aa).

9 consecutive C2H2-type zinc fingers follow at residues 38 to 62, 68 to 92, 98 to 123, 130 to 154, 160 to 184, 187 to 211, 215 to 237, 244 to 269, and 275 to 299; these read FICS…LCKH, FVCD…ILIH, FVCA…ERKH, YVCN…QCQH, FRCT…GKVH, YLCQ…REAH, VTCT…MKTH, YRCP…LSFH, and FVCE…SVVH. The disordered stretch occupies residues 301-363; the sequence is PDKKRMKLKV…LAPAALLTVH (63 aa). Low complexity predominate over residues 338–350; it reads SLPNSTESSSSPE.

The protein localises to the nucleus. Functionally, involved in ribosomal large subunit biogenesis. Binds the approximately 50 base pairs internal control region (ICR) of 5S ribosomal RNA genes. It is required for their RNA polymerase III-dependent transcription and may also maintain the transcription of other genes. Also binds the transcribed 5S RNA's. The sequence is that of Transcription factor IIIA (Gtf3a) from Rattus norvegicus (Rat).